Here is a 349-residue protein sequence, read N- to C-terminus: Flap endonuclease 1 (349 aa).

The segment at Met-1–Lys-98 is N-domain. Mg(2+) is bound by residues Asp-27, Asp-80, Glu-152, Glu-154, Asp-173, Asp-175, and Asp-236. The tract at residues Glu-116 to Asn-258 is I-domain. Residues Lys-341–Phe-349 form an interaction with PCNA region.

It belongs to the XPG/RAD2 endonuclease family. FEN1 subfamily. In terms of assembly, interacts with PCNA. PCNA stimulates the nuclease activity without altering cleavage specificity. Mg(2+) serves as cofactor.

Its function is as follows. Structure-specific nuclease with 5'-flap endonuclease and 5'-3' exonuclease activities involved in DNA replication and repair. During DNA replication, cleaves the 5'-overhanging flap structure that is generated by displacement synthesis when DNA polymerase encounters the 5'-end of a downstream Okazaki fragment. Binds the unpaired 3'-DNA end and kinks the DNA to facilitate 5' cleavage specificity. Cleaves one nucleotide into the double-stranded DNA from the junction in flap DNA, leaving a nick for ligation. Also involved in the base excision repair (BER) pathway. Acts as a genome stabilization factor that prevents flaps from equilibrating into structures that lead to duplications and deletions. Also possesses 5'-3' exonuclease activity on nicked or gapped double-stranded DNA. This chain is Flap endonuclease 1, found in Sulfolobus acidocaldarius (strain ATCC 33909 / DSM 639 / JCM 8929 / NBRC 15157 / NCIMB 11770).